Here is a 103-residue protein sequence, read N- to C-terminus: Histone H4 (103 aa).

Over residues 1 to 14 the composition is skewed to gly residues; it reads MSGRGKGGKGLGKG. The tract at residues 1-20 is disordered; the sequence is MSGRGKGGKGLGKGGAKRHR. Ser-2 is modified (N-acetylserine). Residues Lys-6 and Lys-13 each carry the N6-acetyl-N6-methyllysine; alternate modification. Residues 17–21 mediate DNA binding; it reads KRHRK. Lys-21 carries the N6-methyllysine modification.

Belongs to the histone H4 family. In terms of assembly, the nucleosome is a histone octamer containing two molecules each of H2A, H2B, H3 and H4 assembled in one H3-H4 heterotetramer and two H2A-H2B heterodimers. The octamer wraps approximately 147 bp of DNA.

It is found in the nucleus. It localises to the chromosome. Its function is as follows. Core component of nucleosome. Nucleosomes wrap and compact DNA into chromatin, limiting DNA accessibility to the cellular machineries which require DNA as a template. Histones thereby play a central role in transcription regulation, DNA repair, DNA replication and chromosomal stability. DNA accessibility is regulated via a complex set of post-translational modifications of histones, also called histone code, and nucleosome remodeling. This Solaster stimpsoni (Striped sun sea star) protein is Histone H4.